Reading from the N-terminus, the 519-residue chain is Histidine--tRNA ligase, cytoplasmic (519 aa).

Residues 135–137, Arg-162, Gln-178, Asp-182, Arg-331, and 335–336 each bind L-histidine; these read DLT and YY.

It belongs to the class-II aminoacyl-tRNA synthetase family. Homodimer.

Its subcellular location is the cytoplasm. The catalysed reaction is tRNA(His) + L-histidine + ATP = L-histidyl-tRNA(His) + AMP + diphosphate + H(+). Functionally, catalyzes the ATP-dependent ligation of histidine to the 3'-end of its cognate tRNA, via the formation of an aminoacyl-adenylate intermediate (His-AMP). Plays a role in axon guidance. The polypeptide is Histidine--tRNA ligase, cytoplasmic (hars1) (Takifugu rubripes (Japanese pufferfish)).